A 280-amino-acid polypeptide reads, in one-letter code: NLP effector protein Pc553546 (280 aa).

Residues M1–G19 form the signal peptide. Residues A123–A129 carry the Hepta-peptide GHRHDWE motif motif. N142 and N209 each carry an N-linked (GlcNAc...) asparagine glycan.

It belongs to the Necrosis inducing protein (NPP1) family.

The protein resides in the secreted. In terms of biological role, secreted effector that contributes strongly to virulence during infection by P.capsici. The polypeptide is NLP effector protein Pc553546 (Phytophthora capsici).